A 207-amino-acid polypeptide reads, in one-letter code: NAD--protein ADP-ribosyltransferase modB (207 aa).

An NAD(+)-binding site is contributed by R73. E173 is an active-site residue.

It belongs to the Tevenvirinae NAD--protein ADP-ribosyltransferase modA family.

The protein localises to the virion. The enzyme catalyses L-arginyl-[protein] + NAD(+) = N(omega)-(ADP-D-ribosyl)-L-arginyl-[protein] + nicotinamide + H(+). Its function is as follows. ADP-ribosyltransferase that regulates transcription by ADP-ribosylation of host ribosomal protein S1. Additional identified targets include proteins involved in either translation or cellular metabolism such as elongation factor-Tu or trigger factor. Also reprograms the host's gene-expression system by RNAylating host ribosomal protein S1. ModB can attach NAD-capped RNAs to target proteins post-transcriptionally resulting in covalent RNA-protein conjugates. The chain is NAD--protein ADP-ribosyltransferase modB from Enterobacteria phage T4 (Bacteriophage T4).